The primary structure comprises 329 residues: NAD(P)H-dependent D-xylose reductase (329 aa).

Residue tyrosine 52 is the Proton donor of the active site. Histidine 114 is a binding site for substrate. NAD(+) is bound by residues 173-174 (SN), 222-231 (SSFGPVSFLE), and 278-288 (KSSKKERLLDN).

The protein belongs to the aldo/keto reductase family.

It catalyses the reaction xylitol + NAD(+) = D-xylose + NADH + H(+). It carries out the reaction xylitol + NADP(+) = D-xylose + NADPH + H(+). The protein operates within carbohydrate metabolism; D-xylose degradation. Reduces D-xylose into xylitol. In Kluyveromyces lactis (strain ATCC 8585 / CBS 2359 / DSM 70799 / NBRC 1267 / NRRL Y-1140 / WM37) (Yeast), this protein is NAD(P)H-dependent D-xylose reductase (XYL1).